We begin with the raw amino-acid sequence, 930 residues long: Protein translocase subunit SecA (930 aa).

Residues Gln83, 101–105, and Asp491 each bind ATP; that span reads GEGKT.

Belongs to the SecA family. Monomer and homodimer. Part of the essential Sec protein translocation apparatus which comprises SecA, SecYEG and auxiliary proteins SecDF. Other proteins may also be involved.

The protein resides in the cell inner membrane. Its subcellular location is the cellular thylakoid membrane. The protein localises to the cytoplasm. It carries out the reaction ATP + H2O + cellular proteinSide 1 = ADP + phosphate + cellular proteinSide 2.. In terms of biological role, part of the Sec protein translocase complex. Interacts with the SecYEG preprotein conducting channel. Has a central role in coupling the hydrolysis of ATP to the transfer of proteins into and across the cell membrane, serving as an ATP-driven molecular motor driving the stepwise translocation of polypeptide chains across the membrane. Functionally, probably participates in protein translocation into and across both the cytoplasmic and thylakoid membranes in cyanobacterial cells. The polypeptide is Protein translocase subunit SecA (Nostoc sp. (strain PCC 7120 / SAG 25.82 / UTEX 2576)).